We begin with the raw amino-acid sequence, 307 residues long: Pantothenate kinase (307 aa).

ATP is bound at residue 90–97 (GSVAVGKS).

It belongs to the prokaryotic pantothenate kinase family.

The protein localises to the cytoplasm. The enzyme catalyses (R)-pantothenate + ATP = (R)-4'-phosphopantothenate + ADP + H(+). The protein operates within cofactor biosynthesis; coenzyme A biosynthesis; CoA from (R)-pantothenate: step 1/5. In Levilactobacillus brevis (strain ATCC 367 / BCRC 12310 / CIP 105137 / JCM 1170 / LMG 11437 / NCIMB 947 / NCTC 947) (Lactobacillus brevis), this protein is Pantothenate kinase.